Here is a 367-residue protein sequence, read N- to C-terminus: Polyenoic acids biosynthesis gene cluster protein Ba17b (367 aa).

Helical transmembrane passes span 16–36 (LEVFIAVFTPLTIIAVALRFY), 50–70 (WLIIAALVGQIVAGGIAIGAV), and 90–110 (LVAFFKYLVAMSTWYATTEGL). Asn-133 carries N-linked (GlcNAc...) asparagine glycosylation. 3 helical membrane-spanning segments follow: residues 137–157 (LVLVGASVGGGLADLFGCTPF), 183–203 (FPNIVTDVVLLVLPMPIVWGL), and 211–231 (LVLVLTFLFGSIFGELIGGDS). Asn-245 is a glycosylation site (N-linked (GlcNAc...) asparagine). The helical transmembrane segment at 259 to 279 (LIIWTVCEPGVYLIAACLLVY) threads the bilayer.

Belongs to the SAT4 family.

The protein resides in the membrane. It participates in secondary metabolite biosynthesis. In terms of biological role, part of the gene cluster that mediates the biosynthesis of (2Z,4E,6E,10E)-9-hydroxydodeca-2,4,6,10-tetraenoic acid (BAA), (2E,4E,6E,10E)-9-hydroxydodeca-2,4,6,10-tetraenoic acid (BAB), and (2Z,4E,6E)-octa-2,4,6-trienedioic acid (PBA). The highly reducing polyketide synthase Ba17a is sufficent to produce PBA and BAA. The still to be characterized protein Ba17b leads to an increased production of BAA as well as to the production of the new compound BAB. BAA does not possess insecticidal activity against G.mellonella larvae, however, both BAA and BAB increase the growth of Candida albicans and BAA can mitigate the fungicidal effects of fluconazole over C.albicans, suggesting that generalist pathogens such as M.anisopliae, can potentially manipulate the yeast microbiota found in arthropods (and anywhere else) by the activity of compounds as BAA and BAB. The protein is Polyenoic acids biosynthesis gene cluster protein Ba17b of Metarhizium anisopliae (Entomophthora anisopliae).